The primary structure comprises 1375 residues: Protein lingerer (1375 aa).

Residues 1 to 69 (MSTQTRSGGG…KAQPKATTEQ (69 aa)) form a disordered region. A compositionally biased stretch (basic and acidic residues) spans 53–62 (SKTDKPEKAQ). A UBA domain is found at 84-124 (QINEKVLLLLTMTQRSEEEVCCALNECDYDLEAAANFLIEE). Low complexity-rich tracts occupy residues 142-161 (ANNT…GNGN) and 173-184 (SNRGGTRGSSDS). Residues 142–286 (ANNTADGAAG…GSGRGGNANE (145 aa)) are disordered. Basic and acidic residues predominate over residues 185–204 (RGWRGRETRENERNQRESRE). The segment covering 228–282 (RNGGGRSGPGGGGRGGGFVSRSGRGGGRMGGRTGGPRGDRGSGGPGGAYGSGRGG) has biased composition (gly residues). Tyr321 is modified (phosphotyrosine). Position 324 is a phosphoserine (Ser324). 2 stretches are compositionally biased toward polar residues: residues 374-387 (VQQG…SSSG) and 395-412 (ATLS…SAAV). Disordered stretches follow at residues 374-453 (VQQG…ASPD) and 613-646 (FEPL…QQQQ). The span at 426–441 (SGAGTGASAAAGGGAG) shows a compositional bias: gly residues. Low complexity-rich tracts occupy residues 442–453 (STPSSFVSASPD) and 629–646 (QQQQ…QQQQ). Position 672 is a phosphoserine (Ser672). Thr673 carries the post-translational modification Phosphothreonine. Ser674 is modified (phosphoserine). Residues 750 to 767 (QGYGSYQPSSYQQQAGSG) are compositionally biased toward low complexity. Disordered regions lie at residues 750–801 (QGYG…SGNA), 869–894 (SVST…GQTG), 987–1036 (KNTS…GGSG), 1203–1234 (SKGG…DLTS), and 1251–1277 (EKQS…TSAQ). Gly residues predominate over residues 768-781 (AQSGTGAVSGGGGT). Composition is skewed to low complexity over residues 789–801 (GGSS…SGNA), 869–882 (SVST…NSGS), and 987–1008 (KNTS…TGNA). Residues 1009 to 1036 (SGQGAGASTGGVGSSSGAGGAGSGGGSG) are compositionally biased toward gly residues. Positions 1265–1277 (MPNTQTAGGTSAQ) are enriched in polar residues.

As to expression, at stage 11, expression is restricted to the neuroblasts, predominant in the central nervous system (CNS), including the brain and ventral nerve cord, and in the PNS. Later embryonic expression is seen in the gonads. Late third instar larvae show expression in the CNS, imaginal disks (including genital, eye-antennal, leg, wing and haltere disks), and gonads. In the larval brain, it is expressed in all of the glial cells and in clusters of neurons that projected contralaterally. In the larval ventral ganglion, it is expressed in subperineurial glia, peripheral exit glia, and a number of interneurons, but not in motor neurons. Isoform B is abundantly expressed in males and females. Isoform D is male specific and expressed at low levels.

It is found in the cytoplasm. Functionally, acts in the nervous system to mediate the control of copulatory organs during courtship. The sequence is that of Protein lingerer from Drosophila melanogaster (Fruit fly).